The sequence spans 291 residues: 4-hydroxy-tetrahydrodipicolinate synthase (291 aa).

Thr47 lines the pyruvate pocket. Tyr136 serves as the catalytic Proton donor/acceptor. The active-site Schiff-base intermediate with substrate is the Lys164. Position 206 (Ile206) interacts with pyruvate.

Belongs to the DapA family. As to quaternary structure, homotetramer; dimer of dimers.

Its subcellular location is the cytoplasm. The enzyme catalyses L-aspartate 4-semialdehyde + pyruvate = (2S,4S)-4-hydroxy-2,3,4,5-tetrahydrodipicolinate + H2O + H(+). The protein operates within amino-acid biosynthesis; L-lysine biosynthesis via DAP pathway; (S)-tetrahydrodipicolinate from L-aspartate: step 3/4. Catalyzes the condensation of (S)-aspartate-beta-semialdehyde [(S)-ASA] and pyruvate to 4-hydroxy-tetrahydrodipicolinate (HTPA). This chain is 4-hydroxy-tetrahydrodipicolinate synthase, found in Leuconostoc citreum (strain KM20).